Reading from the N-terminus, the 155-residue chain is Fibroblast growth factor 1 (155 aa).

The residue at position 2 (A2) is an N-acetylalanine. A propeptide spanning residues 2-15 (AEGEITTFAALTER) is cleaved from the precursor. Position 33 (N33) interacts with heparin. Residues 127 to 143 (KKNGSCKRGPRTHYGQK) form a heparin-binding region.

Belongs to the heparin-binding growth factors family. As to quaternary structure, monomer. Homodimer. Interacts with FGFR1, FGFR2, FGFR3 and FGFR4. Affinity between fibroblast growth factors (FGFs) and their receptors is increased by heparan sulfate glycosaminoglycans that function as coreceptors. Found in a complex with FGFBP1, FGF1 and FGF2. Interacts with FGFBP1. Part of a Cu(2+)-dependent multiprotein aggregate containing FGF1, S100A13 and SYT1. Interacts with SYT1. Interacts with S100A13. Interacts with LRRC59. Interacts with CSNKA, CSNKB and FIBP. While binding with LRRC59, CSNKA and FIBP seem mutually exclusive, CSNKB and FIBP may cooperatively interact with FGF1. Forms a ternary complex with FGFR1 and ITGAV:ITGB3 and induces the recruitment of PTPN11 to the complex. In the nucleus, phosphorylated by PKC/PRKCD.

It localises to the secreted. It is found in the cytoplasm. The protein localises to the cell cortex. Its subcellular location is the cytosol. The protein resides in the nucleus. Functionally, plays an important role in the regulation of cell survival, cell division, angiogenesis, cell differentiation and cell migration. Functions as a potent mitogen in vitro. Acts as a ligand for FGFR1 and integrins. Binds to FGFR1 in the presence of heparin leading to FGFR1 dimerization and activation via sequential autophosphorylation on tyrosine residues which act as docking sites for interacting proteins, leading to the activation of several signaling cascades. Binds to integrin ITGAV:ITGB3. Its binding to integrin, subsequent ternary complex formation with integrin and FGFR1, and the recruitment of PTPN11 to the complex are essential for FGF1 signaling. Induces the phosphorylation and activation of FGFR1, FRS2, MAPK3/ERK1, MAPK1/ERK2 and AKT1. Can induce angiogenesis. The sequence is that of Fibroblast growth factor 1 (Fgf1) from Mus musculus (Mouse).